Reading from the N-terminus, the 305-residue chain is Oligopeptide transport system permease protein OppC (305 aa).

The next 6 helical transmembrane spans lie at 43 to 63 (AMVG…APMF), 105 to 125 (ISIF…VIWG), 166 to 185 (LFTI…ARIV), 212 to 232 (LFKH…TLTV), 236 to 256 (IFTE…LASW), and 274 to 294 (LFFP…VGDG). Residues 103-292 (ARISIFIGVA…ITMFGFNVVG (190 aa)) enclose the ABC transmembrane type-1 domain.

This sequence belongs to the binding-protein-dependent transport system permease family. OppBC subfamily. The complex is composed of two ATP-binding proteins (OppD and OppF), two transmembrane proteins (OppB and OppC) and a solute-binding protein (OppA).

Its subcellular location is the cell membrane. In terms of biological role, part of the ABC transporter complex OppABCDF involved in the uptake of oligopeptides. Probably responsible for the translocation of the substrate across the membrane. Required for sporulation and genetic competence. This Bacillus subtilis (strain 168) protein is Oligopeptide transport system permease protein OppC.